The chain runs to 411 residues: Growth-regulating factor 7 (411 aa).

The QLQ domain maps to proline 38–arginine 73. One can recognise a WRC domain in the interval aspartate 108–glycine 152. 2 short sequence motifs (bipartite nuclear localization signal) span residues arginine 113–arginine 123 and arginine 141–lysine 148. Residues phenylalanine 333–proline 369 are disordered. The segment covering histidine 360–proline 369 has biased composition (polar residues).

It belongs to the GRF family.

It localises to the nucleus. Transcription activator that plays a regulatory role in gibberellin-induced stem elongation. In Oryza sativa subsp. japonica (Rice), this protein is Growth-regulating factor 7 (GRF7).